The chain runs to 152 residues: Arginine repressor (152 aa).

It belongs to the ArgR family.

Its subcellular location is the cytoplasm. Its pathway is amino-acid biosynthesis; L-arginine biosynthesis [regulation]. Functionally, regulates arginine biosynthesis genes. In Caldicellulosiruptor saccharolyticus (strain ATCC 43494 / DSM 8903 / Tp8T 6331), this protein is Arginine repressor.